A 406-amino-acid chain; its full sequence is COP9 signalosome complex subunit 4 (406 aa).

The residue at position 2 (Ala2) is an N-acetylalanine. N6-acetyllysine is present on Lys25. Positions 197–366 (YRRKFIEAAQ…GIVHFETREA (170 aa)) constitute a PCI domain.

The protein belongs to the CSN4 family. As to quaternary structure, component of the CSN complex, composed of COPS1/GPS1, COPS2, COPS3, COPS4, COPS5, COPS6, COPS7 (COPS7A or COPS7B), COPS8 and COPS9 isoform 1. In the complex, it probably interacts directly with COPS1, COPS2, COPS3, COPS5, COPS6, COPS7 (COPS7A or COPS7B) and COPS8. Interacts with TOR1A; the interaction is direct and associates TOR1A and SNAPIN with the CSN complex. Interacts with STON2; controls STON2 neddylation levels. Interacts with ERCC6.

It is found in the cytoplasm. Its subcellular location is the nucleus. The protein resides in the cytoplasmic vesicle. The protein localises to the secretory vesicle. It localises to the synaptic vesicle. In terms of biological role, component of the COP9 signalosome complex (CSN), a complex involved in various cellular and developmental processes. The CSN complex is an essential regulator of the ubiquitin (Ubl) conjugation pathway by mediating the deneddylation of the cullin subunits of SCF-type E3 ligase complexes, leading to decrease the Ubl ligase activity of SCF-type complexes such as SCF, CSA or DDB2. Also involved in the deneddylation of non-cullin subunits such as STON2. The complex is also involved in phosphorylation of p53/TP53, c-jun/JUN, IkappaBalpha/NFKBIA, ITPK1, IRF8/ICSBP and SNAPIN, possibly via its association with CK2 and PKD kinases. CSN-dependent phosphorylation of TP53 and JUN promotes and protects degradation by the Ubl system, respectively. The polypeptide is COP9 signalosome complex subunit 4 (COPS4) (Homo sapiens (Human)).